Reading from the N-terminus, the 73-residue chain is Long neurotoxin 1 (73 aa).

5 cysteine pairs are disulfide-bonded: C3–C21, C14–C42, C27–C31, C46–C57, and C58–C63.

Belongs to the three-finger toxin family. Long-chain subfamily. Type II alpha-neurotoxin sub-subfamily. Expressed by the venom gland.

The protein localises to the secreted. Its function is as follows. Binds with high affinity to muscular (alpha-1/CHRNA1) and neuronal (alpha-7/CHRNA7) nicotinic acetylcholine receptor (nAChR) and inhibits acetylcholine from binding to the receptor, thereby impairing neuromuscular and neuronal transmission. The polypeptide is Long neurotoxin 1 (Ophiophagus hannah (King cobra)).